The sequence spans 897 residues: Interference hedgehog (897 aa).

The N-terminal stretch at Met1–Ala26 is a signal peptide. Residues Ala27–Pro702 lie on the Extracellular side of the membrane. 4 consecutive Ig-like C2-type domains span residues Pro40–Ser147, Gly148–Glu235, Pro244–Leu336, and Pro342–Asn429. Disulfide bonds link Cys63-Cys125, Cys169-Cys217, and Cys272-Cys320. Residues Asn96 and Asn99 are each glycosylated (N-linked (GlcNAc...) asparagine). N-linked (GlcNAc...) asparagine glycosylation is found at Asn296, Asn351, Asn393, and Asn467. Cys363 and Cys411 are joined by a disulfide. The tract at residues Gln434–Val468 is disordered. Fibronectin type-III domains follow at residues Pro462–Gly571 and Val579–Pro674. Arg498, Lys504, and Lys506 together coordinate heparin. The N-linked (GlcNAc...) asparagine glycan is linked to Asn530. Arg545 contacts heparin. Asn561 is a glycosylation site (N-linked (GlcNAc...) asparagine). A compositionally biased stretch (polar residues) spans Leu666 to Pro682. The segment at Leu666 to His694 is disordered. Low complexity predominate over residues Thr683–His694. Asn695 carries N-linked (GlcNAc...) asparagine glycosylation. The chain crosses the membrane as a helical span at residues Leu703–Leu723. The Cytoplasmic portion of the chain corresponds to Cys724–Val897. 2 disordered regions span residues Ala773–Asp793 and Met819–Gln849. Residues Gln774–His784 are compositionally biased toward low complexity.

Belongs to the immunoglobulin superfamily. IHOG family. In terms of assembly, homodimer. Heterotetramer; 2 iHog chains bind 2 hh chains when facilitated by heparin, heparin is required to promote high-affinity interactions between hh and iHog.

It localises to the membrane. Functionally, mediates response to the active Hedgehog (Hh) protein signal in embryos, functioning upstream or at the level of patched (ptc). The polypeptide is Interference hedgehog (Drosophila mojavensis (Fruit fly)).